The chain runs to 758 residues: 5-methyltetrahydropteroyltriglutamate--homocysteine methyltransferase (758 aa).

5-methyltetrahydropteroyltri-L-glutamate is bound by residues 15–18 and K114; that span reads RELK. L-homocysteine-binding positions include 433 to 435 and E486; that span reads IGS. L-methionine contacts are provided by residues 433 to 435 and E486; that span reads IGS. Residues 517–518 and W563 contribute to the 5-methyltetrahydropteroyltri-L-glutamate site; that span reads RC. D601 contacts L-homocysteine. D601 is an L-methionine binding site. Residue E607 participates in 5-methyltetrahydropteroyltri-L-glutamate binding. H643, C645, and E667 together coordinate Zn(2+). The active-site Proton donor is H696. Residue C728 coordinates Zn(2+).

Belongs to the vitamin-B12 independent methionine synthase family. Zn(2+) serves as cofactor.

The catalysed reaction is 5-methyltetrahydropteroyltri-L-glutamate + L-homocysteine = tetrahydropteroyltri-L-glutamate + L-methionine. Its pathway is amino-acid biosynthesis; L-methionine biosynthesis via de novo pathway; L-methionine from L-homocysteine (MetE route): step 1/1. In terms of biological role, catalyzes the transfer of a methyl group from 5-methyltetrahydrofolate to homocysteine resulting in methionine formation. This is 5-methyltetrahydropteroyltriglutamate--homocysteine methyltransferase from Syntrophotalea carbinolica (strain DSM 2380 / NBRC 103641 / GraBd1) (Pelobacter carbinolicus).